The sequence spans 154 residues: Large ribosomal subunit protein uL23 (154 aa).

Belongs to the universal ribosomal protein uL23 family.

This protein binds to a specific region on the 26S rRNA. This is Large ribosomal subunit protein uL23 (RPL23A) from Daucus carota (Wild carrot).